A 100-amino-acid polypeptide reads, in one-letter code: Osteocalcin (100 aa).

The first 23 residues, 1 to 23, serve as a signal peptide directing secretion; sequence MRALTLLALLALAALCIAGQAGA. Positions 24–51 are excised as a propeptide; sequence KPSGAESSKGAAFVSKQEGSEVVKRPRR. Residues 52–98 enclose the Gla domain; the sequence is YLYQWLGAPVPYPDPLEPRREVCELNPDCDELADHIGFQEAYRRFYG. Ca(2+) contacts are provided by glutamate 68, glutamate 72, glutamate 75, and aspartate 81. A 4-carboxyglutamate; partial modification is found at glutamate 68. 4-carboxyglutamate occurs at positions 72 and 75. Cysteine 74 and cysteine 80 are disulfide-bonded.

This sequence belongs to the osteocalcin/matrix Gla protein family. Gamma-carboxyglutamate residues are formed by vitamin K dependent carboxylation by GGCX. These residues are essential for the binding of calcium. Decarboxylation promotes the hormone activity.

Its subcellular location is the secreted. Functionally, bone protein that constitutes 1-2% of the total bone protein, and which acts as a negative regulator of bone formation. Functions to limit bone formation without impairing bone resorption or mineralization. It binds strongly to apatite and calcium. Its function is as follows. The uncarboxylated form acts as a hormone secreted by osteoblasts, which regulates different cellular processes, such as energy metabolism, male fertility and brain development. Regulates of energy metabolism by acting as a hormone favoring pancreatic beta-cell proliferation, insulin secretion and sensitivity and energy expenditure. Uncarboxylated osteocalcin hormone also promotes testosterone production in the testes: acts as a ligand for G protein-coupled receptor GPRC6A at the surface of Leydig cells, initiating a signaling response that promotes the expression of enzymes required for testosterone synthesis in a CREB-dependent manner. Also acts as a regulator of brain development: osteocalcin hormone crosses the blood-brain barrier and acts as a ligand for GPR158 on neurons, initiating a signaling response that prevents neuronal apoptosis in the hippocampus, favors the synthesis of all monoamine neurotransmitters and inhibits that of gamma-aminobutyric acid (GABA). Osteocalcin also crosses the placenta during pregnancy and maternal osteocalcin is required for fetal brain development. This is Osteocalcin (BGLAP) from Homo sapiens (Human).